The sequence spans 324 residues: MRCWVWLLVAIVLCQQLSVVRVLAAKKERKKGKDPHQFTEPFNVSLSNSEELHETDKLSETPDPGLPDAYTTWLGFVGRTDDGANSKKKCKGKDKKLRGLFGPPGPPGPQGPPGPPGMPGAEVTYEVLLQDFKQMLKEATERRLMSGDIPEHTSELPPIVLPVEDLSPYRRVDEGFHCRLKGQVIVDKKTLVELQNFQMPTAKGSFLRGSGLNLATGRFTASVPGIYQFSAHVHIDHSEIKSKAQLRPRDNVRVLICIESMCHRYTSLEVIAGLESNSKIFTVHVQGLLQLQVGQYTSIFVDNSAGAPITVQNGSDFMGILMGL.

The signal sequence occupies residues Met-1–Ala-24. Disordered regions lie at residues Glu-28–Leu-66 and Gly-83–Ala-121. A compositionally biased stretch (polar residues) spans Glu-40 to Ser-49. Asn-43 carries N-linked (GlcNAc...) asparagine glycosylation. A compositionally biased stretch (basic and acidic residues) spans Glu-50–Glu-60. Over residues Ser-86–Arg-98 the composition is skewed to basic residues. The segment covering Pro-103 to Met-118 has biased composition (pro residues). A C1q domain is found at Tyr-169–Leu-324.

The protein belongs to the adipolin/erythroferrone family. Homomultimer; disulfide-linked.

It is found in the secreted. Its function is as follows. Insulin-sensitizing adipocyte-secreted protein (adipokine) that regulates glucose metabolism in liver and adipose tissue. The protein is Adipolin (c1qtnf12) of Xenopus tropicalis (Western clawed frog).